Reading from the N-terminus, the 302-residue chain is Methionyl-tRNA formyltransferase (302 aa).

107–110 contributes to the (6S)-5,6,7,8-tetrahydrofolate binding site; sequence SDLP.

The protein belongs to the Fmt family.

It carries out the reaction L-methionyl-tRNA(fMet) + (6R)-10-formyltetrahydrofolate = N-formyl-L-methionyl-tRNA(fMet) + (6S)-5,6,7,8-tetrahydrofolate + H(+). Attaches a formyl group to the free amino group of methionyl-tRNA(fMet). The formyl group appears to play a dual role in the initiator identity of N-formylmethionyl-tRNA by promoting its recognition by IF2 and preventing the misappropriation of this tRNA by the elongation apparatus. The polypeptide is Methionyl-tRNA formyltransferase (Rickettsia massiliae (strain Mtu5)).